Consider the following 408-residue polypeptide: MAVEKTVPGGVRTVLVTGGAGYIGSHAVLQLLLAGFRAVVVDNLNNSSELAVRRVAALAGDHSRNLAFHKVDLRDKGALEKVFASTRFDAVVHFAGLKAVGESVQKPLLYYDNNVNGTVNLLEVMSAHGCKKLVFSSSAAVYGSPKNSPCTEEFPLTPNNPYGKTKLVVEDICRDIYRTDPEWKIILLRYFNPVGAHPSGYLGEDPCGIPNNLMPYVQQVAVGRRPALTILGNDYATRDGTGVRDYIHVVDLADGHIAALQKLFESSSIGCEAYNLGTGKGTSVLEIVKAFEKASGKKIPLIIGPRRPGDAEILFSLPAKAEKELNWKAKFGIDEMCRDQWNWASKNPYGYGSLDSTKQNGHHSYGSIGSPKQNGHCTNGFSESTRHNGHNGYGLVDSAKHNGNGHFH.

An NAD(+)-binding site is contributed by 13–44 (TVLVTGGAGYIGSHAVLQLLLAGFRAVVVDNL). Residue S138 participates in substrate binding. Residue Y162 is the Proton acceptor of the active site. The disordered stretch occupies residues 369–408 (GSPKQNGHCTNGFSESTRHNGHNGYGLVDSAKHNGNGHFH). Residues 370–383 (SPKQNGHCTNGFSE) show a composition bias toward polar residues.

This sequence belongs to the NAD(P)-dependent epimerase/dehydratase family. NAD(+) serves as cofactor.

It carries out the reaction UDP-alpha-D-glucose = UDP-alpha-D-galactose. Its pathway is carbohydrate metabolism; galactose metabolism. Catalyzes the interconversion between UDP-glucose and UDP-galactose. The protein is UDP-glucose 4-epimerase 2 (UGE-2) of Oryza sativa subsp. japonica (Rice).